Here is a 426-residue protein sequence, read N- to C-terminus: 4-hydroxy-3-methylbut-2-en-1-yl diphosphate synthase (flavodoxin) (426 aa).

[4Fe-4S] cluster contacts are provided by C310, C313, C356, and E363.

This sequence belongs to the IspG family. Requires [4Fe-4S] cluster as cofactor.

It catalyses the reaction (2E)-4-hydroxy-3-methylbut-2-enyl diphosphate + oxidized [flavodoxin] + H2O + 2 H(+) = 2-C-methyl-D-erythritol 2,4-cyclic diphosphate + reduced [flavodoxin]. The protein operates within isoprenoid biosynthesis; isopentenyl diphosphate biosynthesis via DXP pathway; isopentenyl diphosphate from 1-deoxy-D-xylulose 5-phosphate: step 5/6. Converts 2C-methyl-D-erythritol 2,4-cyclodiphosphate (ME-2,4cPP) into 1-hydroxy-2-methyl-2-(E)-butenyl 4-diphosphate. This chain is 4-hydroxy-3-methylbut-2-en-1-yl diphosphate synthase (flavodoxin), found in Rhodopseudomonas palustris (strain BisA53).